A 464-amino-acid chain; its full sequence is Alpha-1,6-mannosyl-glycoprotein 4-beta-N-acetylglucosaminyltransferase (464 aa).

Residues 1–10 (MRCSPKRSLT) are Cytoplasmic-facing. Residues 11-31 (AVIAASFLLLLLLLLLHRGSW) traverse the membrane as a helical; Signal-anchor for type II membrane protein segment. The Lumenal portion of the chain corresponds to 32–464 (QDPQEVQFRD…QSIGIWTAGT (433 aa)). Asn-70 and Asn-201 each carry an N-linked (GlcNAc...) asparagine glycan.

Belongs to the glycosyltransferase 54 family. A divalent metal cation serves as cofactor. As to expression, highly expressed in oviduct, spleen, lung and colon.

The protein resides in the golgi apparatus membrane. It catalyses the reaction N(4)-{beta-D-GlcNAc-(1-&gt;2)-[beta-D-GlcNAc-(1-&gt;4)]-alpha-D-Man-(1-&gt;3)-[beta-D-GlcNAc-(1-&gt;2)-[beta-D-GlcNAc-(1-&gt;6)]-alpha-D-Man-(1-&gt;6)]-beta-D-Man-(1-&gt;4)-beta-D-GlcNAc-(1-&gt;4)-beta-D-GlcNAc}-L-asparaginyl-[protein] + UDP-N-acetyl-alpha-D-glucosamine = N(4)-{beta-D-GlcNAc-(1-&gt;2)-[beta-D-GlcNAc-(1-&gt;4)]-alpha-D-Man-(1-&gt;3)-[beta-D-GlcNAc-(1-&gt;2)-[beta-D-GlcNAc-(1-&gt;4)]-[beta-D-GlcNAc-(1-&gt;6)]-alpha-D-Man-(1-&gt;6)]-beta-D-Man-(1-&gt;4)-beta-D-GlcNAc-(1-&gt;4)-beta-D-GlcNAc}-L-asparaginyl-[protein] + UDP + H(+). The protein operates within protein modification; protein glycosylation. Its function is as follows. Glycosyltransferase that catalyzes the transfer of GlcNAc to the Manalpha1-6 arm to form GlcNAcBeta1-4Manalpha1-6 linkage (also named 'GnT-VI' activity). May also participate in the transfer of N-acetylglucosamine (GlcNAc) to the core mannose residues of N-linked glycans by catalyzing the formation of the GlcNAcbeta1-4 branch on the GlcNAcbeta1-2Manalpha1-3 arm of the core structure of N-linked glycans. This Gallus gallus (Chicken) protein is Alpha-1,6-mannosyl-glycoprotein 4-beta-N-acetylglucosaminyltransferase (MGAT4C).